A 215-amino-acid chain; its full sequence is Extracellular small neutral protease (215 aa).

A signal peptide spans Met-1–Ala-30. A Ca(2+)-binding site is contributed by Thr-152. His-157 contacts Zn(2+). Glu-158 is a catalytic residue. The Zn(2+) site is built by His-161 and Asp-167. A disulfide bond links Cys-173 and Cys-186.

Belongs to the peptidase M7 family. Zn(2+) is required as a cofactor.

Its subcellular location is the secreted. It carries out the reaction Hydrolyzes proteins with a preference for Tyr or Phe in the P1' position. Has no action on amino-acid p-nitroanilides.. This Streptomyces coelicolor protein is Extracellular small neutral protease (snpA).